Here is a 382-residue protein sequence, read N- to C-terminus: MKRDYYEVLGVSRSADKDEIKKAYRKLALKYHPDKNPDNKDAEDHFKEVNEAYEVLSNDDKRRRYDQFGHAGVGSSAASGGGGGQYGGGADFSDIFSAFNDMFGGGGGGSQRRRAASGIPGVDLKIRLKLTLEEIAKGVEKTIKIKKQVPCKECNGSGSKTGATETCPTCHGAGEVRQASKTMFGQFVNIAACPTCGGEGRIVKDRCPSCYGEGIKQGEVTVKVNVPAGVQEGNYLTLRGQGNSGPRGGAPGDLIVMIEEKPHELFVRNGDDVIYSLAVSFPDLVLGTKVDVPTLEGAVKLTIPAGTQPETMLRIPGHGIGHLRGSGKGDQYVRVNVYVPKELTQQDKDLLRDLRKSPSIAPEAHSAGGAKSFFEKARDIFG.

A J domain is found at 4-69; the sequence is DYYEVLGVSR…DKRRRYDQFG (66 aa). The CR-type zinc-finger motif lies at 138-219; it reads GVEKTIKIKK…CYGEGIKQGE (82 aa). Residues Cys-151, Cys-154, Cys-167, Cys-170, Cys-193, Cys-196, Cys-207, and Cys-210 each contribute to the Zn(2+) site. CXXCXGXG motif repeat units lie at residues 151 to 158, 167 to 174, 193 to 200, and 207 to 214; these read CKECNGSG, CPTCHGAG, CPTCGGEG, and CPSCYGEG.

The protein belongs to the DnaJ family. As to quaternary structure, homodimer. It depends on Zn(2+) as a cofactor.

The protein localises to the cytoplasm. Participates actively in the response to hyperosmotic and heat shock by preventing the aggregation of stress-denatured proteins and by disaggregating proteins, also in an autonomous, DnaK-independent fashion. Unfolded proteins bind initially to DnaJ; upon interaction with the DnaJ-bound protein, DnaK hydrolyzes its bound ATP, resulting in the formation of a stable complex. GrpE releases ADP from DnaK; ATP binding to DnaK triggers the release of the substrate protein, thus completing the reaction cycle. Several rounds of ATP-dependent interactions between DnaJ, DnaK and GrpE are required for fully efficient folding. Also involved, together with DnaK and GrpE, in the DNA replication of plasmids through activation of initiation proteins. The sequence is that of Chaperone protein DnaJ from Chlorobium luteolum (strain DSM 273 / BCRC 81028 / 2530) (Pelodictyon luteolum).